The sequence spans 188 residues: Elongation factor P (188 aa).

Belongs to the elongation factor P family.

It is found in the cytoplasm. It functions in the pathway protein biosynthesis; polypeptide chain elongation. In terms of biological role, involved in peptide bond synthesis. Stimulates efficient translation and peptide-bond synthesis on native or reconstituted 70S ribosomes in vitro. Probably functions indirectly by altering the affinity of the ribosome for aminoacyl-tRNA, thus increasing their reactivity as acceptors for peptidyl transferase. This is Elongation factor P from Aeromonas hydrophila subsp. hydrophila (strain ATCC 7966 / DSM 30187 / BCRC 13018 / CCUG 14551 / JCM 1027 / KCTC 2358 / NCIMB 9240 / NCTC 8049).